A 449-amino-acid chain; its full sequence is Glutamate--tRNA ligase 1 (449 aa).

The short motif at 11–21 (PSPTGSLHVGN) is the 'HIGH' region element. Positions 242–246 (PLSKR) match the 'KMSKS' region motif. Lys-245 contributes to the ATP binding site.

The protein belongs to the class-I aminoacyl-tRNA synthetase family. Glutamate--tRNA ligase type 1 subfamily. In terms of assembly, monomer.

It localises to the cytoplasm. It catalyses the reaction tRNA(Glu) + L-glutamate + ATP = L-glutamyl-tRNA(Glu) + AMP + diphosphate. In terms of biological role, catalyzes the attachment of glutamate to tRNA(Glu) in a two-step reaction: glutamate is first activated by ATP to form Glu-AMP and then transferred to the acceptor end of tRNA(Glu). The sequence is that of Glutamate--tRNA ligase 1 from Parvibaculum lavamentivorans (strain DS-1 / DSM 13023 / NCIMB 13966).